The primary structure comprises 284 residues: Shikimate dehydrogenase (NADP(+)) (284 aa).

Residues 20 to 22 (SIS) and Ser-67 contribute to the shikimate site. The active-site Proton acceptor is the Lys-71. Asp-83 contributes to the NADP(+) binding site. Positions 92 and 107 each coordinate shikimate. Residues 129 to 133 (GAGGA) and Ile-227 contribute to the NADP(+) site. A shikimate-binding site is contributed by Tyr-229. Gly-250 contacts NADP(+).

This sequence belongs to the shikimate dehydrogenase family. As to quaternary structure, homodimer.

It carries out the reaction shikimate + NADP(+) = 3-dehydroshikimate + NADPH + H(+). It participates in metabolic intermediate biosynthesis; chorismate biosynthesis; chorismate from D-erythrose 4-phosphate and phosphoenolpyruvate: step 4/7. In terms of biological role, involved in the biosynthesis of the chorismate, which leads to the biosynthesis of aromatic amino acids. Catalyzes the reversible NADPH linked reduction of 3-dehydroshikimate (DHSA) to yield shikimate (SA). This chain is Shikimate dehydrogenase (NADP(+)), found in Streptococcus pneumoniae (strain JJA).